Consider the following 161-residue polypeptide: MNQFGPSALINLSNFSSIKPEPASTPPQGSMANSTAVVKIPGTPGTGGRLSPENNQVLTKKKLQDLVREVDPNEQLDEDVEEMLLQIADDFIESVVTAACQLARHRKSSTLEVKDVQLHLERQWNMWIPGFGSEEIRPYKKACTTEAHKQRMALIRKTTKK.

The tract at residues Phe15–Asn55 is disordered. Lys19 participates in a covalent cross-link: Glycyl lysine isopeptide (Lys-Gly) (interchain with G-Cter in SUMO2). Positions Pro26–Ala36 are enriched in polar residues. Thr43 carries the post-translational modification Phosphothreonine. Ser51 carries the post-translational modification Phosphoserine. The Histone-fold domain occupies Gln56–Ile128. Thr59 is subject to Phosphothreonine.

It belongs to the TAF12 family. As to quaternary structure, component of the TFIID basal transcription factor complex, composed of TATA-box-binding protein TBP, and a number of TBP-associated factors (TAFs), including TAF1, TAF2, TAF3, TAF4, TAF5, TAF6, TAF7, TAF8, TAF9, TAF10, TAF11, TAF12 and TAF13. Component of the TATA-binding protein-free TAF complex (TFTC), the PCAF histone acetylase complex and the STAGA transcription coactivator-HAT complex. Component of the PCAF complex, at least composed of TADA2L/ADA2, TADA3L/ADA3, TAF5L/PAF65-beta, SUPT3H, TAF6L, TAF9, TAF10, TAF12 and TRRAP. Component of the STAGA transcription coactivator-HAT complex, at least composed of SUPT3H, GCN5L2, TAF5L, TAF6L, STAF65-gamma/SUPT7L, TADA3L, TAD1L, TAF10, TAF12, TRRAP and TAF9. Interacts with ATF7 (via the transactivation domain); the interaction is prevented by sumoylation of ATF7.

It localises to the nucleus. Functionally, the TFIID basal transcription factor complex plays a major role in the initiation of RNA polymerase II (Pol II)-dependent transcription. TFIID recognizes and binds promoters with or without a TATA box via its subunit TBP, a TATA-box-binding protein, and promotes assembly of the pre-initiation complex (PIC). The TFIID complex consists of TBP and TBP-associated factors (TAFs), including TAF1, TAF2, TAF3, TAF4, TAF5, TAF6, TAF7, TAF8, TAF9, TAF10, TAF11, TAF12 and TAF13. Component of the TATA-binding protein-free TAF complex (TFTC), the PCAF histone acetylase complex and the STAGA transcription coactivator-HAT complex. This chain is Transcription initiation factor TFIID subunit 12 (TAF12), found in Bos taurus (Bovine).